A 763-amino-acid polypeptide reads, in one-letter code: Eukaryotic translation initiation factor 3 subunit B (763 aa).

Residues 1–136 (MKNFLPRTLK…LFVECGSMND (136 aa)) form a sufficient for interaction with HCR1 and TIF32 region. The sufficient for interaction with PIC8 stretch occupies residues 28–261 (RNTQLKRSKI…GVTAWGGPNF (234 aa)). Ser61 bears the Phosphoserine mark. Tyr67 carries the phosphotyrosine modification. An RRM domain is found at 77–162 (QYIVVNGAPV…HRLFLYTMKD (86 aa)). WD repeat units follow at residues 228–266 (RENW…RLRR), 277–325 (VSPN…LMAT), 373–416 (LKPS…SACT), 484–524 (ELKD…IRFY), 544–589 (IPKT…EKNI), and 605–650 (PTYS…VKED). Ser669 is modified (phosphoserine).

This sequence belongs to the eIF-3 subunit B family. In terms of assembly, the eukaryotic translation initiation factor 3 (eIF-3) core complex is composed of TIF32, PRT1, NIP1, TIF34 and TIF35. A subcomplex of TIF32, NIP1 and PRT1 mediates the interaction with eIF-1, TIF5/eIF-5 and HCR1. The factors eIF-1, eIF-2, eIF-3, TIF5/eIF-5 and methionyl-tRNAi form a multifactor complex (MFC) that may bind to the 40S ribosome.

The protein resides in the cytoplasm. Functionally, RNA-binding component of the eukaryotic translation initiation factor 3 (eIF-3) complex, which is involved in protein synthesis of a specialized repertoire of mRNAs and, together with other initiation factors, stimulates binding of mRNA and methionyl-tRNAi to the 40S ribosome. The eIF-3 complex specifically targets and initiates translation of a subset of mRNAs involved in cell proliferation. This Saccharomyces cerevisiae (strain ATCC 204508 / S288c) (Baker's yeast) protein is Eukaryotic translation initiation factor 3 subunit B.